The sequence spans 31 residues: Cytochrome b6-f complex subunit 6 (31 aa).

Residues 4 to 24 traverse the membrane as a helical segment; the sequence is ITSYFGFLLVALTITSALFIG.

Belongs to the PetL family. In terms of assembly, the 4 large subunits of the cytochrome b6-f complex are cytochrome b6, subunit IV (17 kDa polypeptide, PetD), cytochrome f and the Rieske protein, while the 4 small subunits are PetG, PetL, PetM and PetN. The complex functions as a dimer.

It localises to the plastid. The protein resides in the chloroplast thylakoid membrane. Its function is as follows. Component of the cytochrome b6-f complex, which mediates electron transfer between photosystem II (PSII) and photosystem I (PSI), cyclic electron flow around PSI, and state transitions. PetL is important for photoautotrophic growth as well as for electron transfer efficiency and stability of the cytochrome b6-f complex. The chain is Cytochrome b6-f complex subunit 6 from Pelargonium hortorum (Common geranium).